An 870-amino-acid chain; its full sequence is Probable inorganic carbon transporter subunit DabA (870 aa).

Zn(2+)-binding residues include Cys-381, Asp-383, His-564, and Cys-579.

It belongs to the inorganic carbon transporter (TC 9.A.2) DabA family. Forms a complex with DabB. Zn(2+) is required as a cofactor.

Its subcellular location is the cell membrane. In terms of biological role, part of an energy-coupled inorganic carbon pump. The sequence is that of Probable inorganic carbon transporter subunit DabA from Geobacillus kaustophilus (strain HTA426).